The following is a 206-amino-acid chain: dITP/XTP pyrophosphatase (206 aa).

7-12 is a binding site for substrate; the sequence is SNNAKK. D72 acts as the Proton acceptor in catalysis. Mg(2+) is bound at residue D72. Substrate contacts are provided by residues S73, 155-158, K182, and 187-188; these read FGYD and HR.

This sequence belongs to the HAM1 NTPase family. In terms of assembly, homodimer. Mg(2+) is required as a cofactor.

It catalyses the reaction XTP + H2O = XMP + diphosphate + H(+). The enzyme catalyses dITP + H2O = dIMP + diphosphate + H(+). It carries out the reaction ITP + H2O = IMP + diphosphate + H(+). Its function is as follows. Pyrophosphatase that catalyzes the hydrolysis of nucleoside triphosphates to their monophosphate derivatives, with a high preference for the non-canonical purine nucleotides XTP (xanthosine triphosphate), dITP (deoxyinosine triphosphate) and ITP. Seems to function as a house-cleaning enzyme that removes non-canonical purine nucleotides from the nucleotide pool, thus preventing their incorporation into DNA/RNA and avoiding chromosomal lesions. This chain is dITP/XTP pyrophosphatase, found in Corynebacterium glutamicum (strain ATCC 13032 / DSM 20300 / JCM 1318 / BCRC 11384 / CCUG 27702 / LMG 3730 / NBRC 12168 / NCIMB 10025 / NRRL B-2784 / 534).